The sequence spans 503 residues: Cytosolic carboxypeptidase 6 (503 aa).

The 272-residue stretch at 167-438 (YPYTYTRFQH…NVARTFLDYY (272 aa)) folds into the Peptidase M14 domain. Zn(2+) is bound by residues H230, E233, and H328. The Proton donor/acceptor role is filled by E401. Basic and acidic residues-rich tracts occupy residues 459-469 (IEVQRRKEKSP) and 487-503 (KGDKKSSVNHKDPSTPF). Residues 459–503 (IEVQRRKEKSPPYKHPLLRGPASNYPNSKGDKKSSVNHKDPSTPF) are disordered.

It belongs to the peptidase M14 family. In terms of assembly, interacts with MYLK. Zn(2+) is required as a cofactor.

The protein resides in the cytoplasm. It localises to the cytosol. Its subcellular location is the cytoskeleton. The protein localises to the microtubule organizing center. It is found in the centrosome. The protein resides in the centriole. It localises to the golgi apparatus. Its subcellular location is the cilium basal body. It catalyses the reaction (L-glutamyl)(n+1)-gamma-L-glutamyl-L-glutamyl-[protein] + H2O = (L-glutamyl)(n)-gamma-L-glutamyl-L-glutamyl-[protein] + L-glutamate. The catalysed reaction is C-terminal L-alpha-aminoacyl-L-glutamyl-L-glutamyl-[tubulin] + H2O = C-terminal L-alpha-aminoacyl-L-glutamyl-[tubulin] + L-glutamate. In terms of biological role, metallocarboxypeptidase that mediates protein deglutamylation of tubulin and non-tubulin target proteins. Catalyzes the removal of polyglutamate side chains present on the gamma-carboxyl group of glutamate residues within the C-terminal tail of tubulin protein. Specifically cleaves tubulin long-side-chains, while it is not able to remove the branching point glutamate. Also catalyzes the removal of polyglutamate residues from the carboxy-terminus of non-tubulin proteins such as MYLK. Mediates the deglutamylation of nucleotidyltransferase CGAS, leading to CGAS antiviral defense response activation. Involved in KLF4 deglutamylation which promotes KLF4 proteasome-mediated degradation, thereby negatively regulating cell pluripotency maintenance and embryogenesis. The chain is Cytosolic carboxypeptidase 6 from Homo sapiens (Human).